Here is a 458-residue protein sequence, read N- to C-terminus: Light-independent protochlorophyllide reductase subunit N (458 aa).

The [4Fe-4S] cluster site is built by cysteine 22, cysteine 47, and cysteine 107.

It belongs to the BchN/ChlN family. As to quaternary structure, protochlorophyllide reductase is composed of three subunits; ChlL, ChlN and ChlB. Forms a heterotetramer of two ChlB and two ChlN subunits. Requires [4Fe-4S] cluster as cofactor.

It is found in the plastid. It localises to the chloroplast. The catalysed reaction is chlorophyllide a + oxidized 2[4Fe-4S]-[ferredoxin] + 2 ADP + 2 phosphate = protochlorophyllide a + reduced 2[4Fe-4S]-[ferredoxin] + 2 ATP + 2 H2O. The protein operates within porphyrin-containing compound metabolism; chlorophyll biosynthesis (light-independent). In terms of biological role, component of the dark-operative protochlorophyllide reductase (DPOR) that uses Mg-ATP and reduced ferredoxin to reduce ring D of protochlorophyllide (Pchlide) to form chlorophyllide a (Chlide). This reaction is light-independent. The NB-protein (ChlN-ChlB) is the catalytic component of the complex. The protein is Light-independent protochlorophyllide reductase subunit N of Chaetosphaeridium globosum (Charophycean green alga).